A 437-amino-acid polypeptide reads, in one-letter code: UDP-N-acetylmuramate--L-alanine ligase (437 aa).

Residue glycine 108–serine 114 coordinates ATP.

It belongs to the MurCDEF family.

The protein resides in the cytoplasm. It carries out the reaction UDP-N-acetyl-alpha-D-muramate + L-alanine + ATP = UDP-N-acetyl-alpha-D-muramoyl-L-alanine + ADP + phosphate + H(+). The protein operates within cell wall biogenesis; peptidoglycan biosynthesis. In terms of biological role, cell wall formation. This chain is UDP-N-acetylmuramate--L-alanine ligase, found in Lysinibacillus sphaericus (strain C3-41).